Consider the following 668-residue polypeptide: Exoribonuclease 2 (668 aa).

An RNB domain is found at 193–521; that stretch reads RIEMTHVPFV…INHRMLKAVI (329 aa). The 83-residue stretch at 568–650 folds into the S1 motif domain; that stretch reads QTCFTGEIFD…ENRSLVAKPT (83 aa).

This sequence belongs to the RNR ribonuclease family. RNase II subfamily.

It is found in the cytoplasm. The catalysed reaction is Exonucleolytic cleavage in the 3'- to 5'-direction to yield nucleoside 5'-phosphates.. Involved in mRNA degradation. Hydrolyzes single-stranded polyribonucleotides processively in the 3' to 5' direction. The chain is Exoribonuclease 2 from Vibrio parahaemolyticus serotype O3:K6 (strain RIMD 2210633).